A 539-amino-acid polypeptide reads, in one-letter code: uncharacterized protein (539 aa).

Disordered stretches follow at residues 179–203 (SDELLPDTGEDSDEDGHNHGGHSHG) and 433–459 (AQASARAQARAARRGRSAAKARGHRDE). Over residues 182–192 (LLPDTGEDSDE) the composition is skewed to acidic residues. Low complexity predominate over residues 433-442 (AQASARAQAR). Positions 443-455 (AARRGRSAAKARG) are enriched in basic residues.

The protein belongs to the mycobacterial PPE family.

The protein localises to the secreted. This is an uncharacterized protein from Mycobacterium tuberculosis (strain CDC 1551 / Oshkosh).